Consider the following 154-residue polypeptide: Ribonuclease H (154 aa).

Positions 1-141 constitute an RNase H type-1 domain; that stretch reads MKRIEAYTDG…ADELAREGME (141 aa). Residues aspartate 9, glutamate 47, aspartate 69, and aspartate 133 each coordinate Mg(2+).

Belongs to the RNase H family. In terms of assembly, monomer. It depends on Mg(2+) as a cofactor.

The protein resides in the cytoplasm. The catalysed reaction is Endonucleolytic cleavage to 5'-phosphomonoester.. Its function is as follows. Endonuclease that specifically degrades the RNA of RNA-DNA hybrids. The protein is Ribonuclease H of Brucella anthropi (strain ATCC 49188 / DSM 6882 / CCUG 24695 / JCM 21032 / LMG 3331 / NBRC 15819 / NCTC 12168 / Alc 37) (Ochrobactrum anthropi).